A 95-amino-acid chain; its full sequence is Acylphosphatase (95 aa).

Positions 7 to 93 constitute an Acylphosphatase-like domain; the sequence is TWQLFAHGRV…QLFDRFDWLP (87 aa). Residues Arg22 and Asn40 contribute to the active site.

The protein belongs to the acylphosphatase family.

The enzyme catalyses an acyl phosphate + H2O = a carboxylate + phosphate + H(+). This chain is Acylphosphatase (acyP), found in Cupriavidus metallidurans (strain ATCC 43123 / DSM 2839 / NBRC 102507 / CH34) (Ralstonia metallidurans).